The primary structure comprises 233 residues: Hydroxyacylglutathione hydrolase (233 aa).

7 residues coordinate Zn(2+): H52, H54, D56, H57, H108, D125, and H163.

Belongs to the metallo-beta-lactamase superfamily. Glyoxalase II family. In terms of assembly, monomer. Zn(2+) is required as a cofactor.

It carries out the reaction an S-(2-hydroxyacyl)glutathione + H2O = a 2-hydroxy carboxylate + glutathione + H(+). It functions in the pathway secondary metabolite metabolism; methylglyoxal degradation; (R)-lactate from methylglyoxal: step 2/2. Its function is as follows. Thiolesterase that catalyzes the hydrolysis of S-D-lactoyl-glutathione to form glutathione and D-lactic acid. The chain is Hydroxyacylglutathione hydrolase from Histophilus somni (strain 2336) (Haemophilus somnus).